We begin with the raw amino-acid sequence, 88 residues long: Large ribosomal subunit protein bL27 (88 aa).

Residues 1 to 26 (MAHKKGTGSTRNGRDSNSKRLGVKAY) form a disordered region.

The protein belongs to the bacterial ribosomal protein bL27 family.

The chain is Large ribosomal subunit protein bL27 from Prochlorococcus marinus (strain MIT 9211).